The primary structure comprises 415 residues: Adenosylhomocysteinase (415 aa).

Residues Thr53, Asp124, and Glu147 each contribute to the substrate site. NAD(+) is bound at residue 148–150; it reads TTT. Residues Lys177 and Asp181 each contribute to the substrate site. NAD(+)-binding positions include Asn182, 211 to 216, Glu234, Asn269, 290 to 292, and Asn337; these read GYGWVG and SGH.

It belongs to the adenosylhomocysteinase family. Requires NAD(+) as cofactor.

The protein resides in the cytoplasm. The catalysed reaction is S-adenosyl-L-homocysteine + H2O = L-homocysteine + adenosine. It participates in amino-acid biosynthesis; L-homocysteine biosynthesis; L-homocysteine from S-adenosyl-L-homocysteine: step 1/1. Functionally, may play a key role in the regulation of the intracellular concentration of adenosylhomocysteine. The chain is Adenosylhomocysteinase from Sulfurisphaera tokodaii (strain DSM 16993 / JCM 10545 / NBRC 100140 / 7) (Sulfolobus tokodaii).